The sequence spans 444 residues: Phosphoribosylamine--glycine ligase (444 aa).

The 216-residue stretch at 109 to 324 (RNLFKKYEID…FLDVCFAIAE (216 aa)) folds into the ATP-grasp domain. An ATP-binding site is contributed by 140-202 (MTSLGKDVVV…EEKLVGVEFT (63 aa)). Mg(2+)-binding residues include glutamine 282, glutamate 294, and asparagine 296. Mn(2+) is bound by residues glutamine 282, glutamate 294, and asparagine 296.

It belongs to the GARS family. Mg(2+) serves as cofactor. It depends on Mn(2+) as a cofactor.

It carries out the reaction 5-phospho-beta-D-ribosylamine + glycine + ATP = N(1)-(5-phospho-beta-D-ribosyl)glycinamide + ADP + phosphate + H(+). It participates in purine metabolism; IMP biosynthesis via de novo pathway; N(1)-(5-phospho-D-ribosyl)glycinamide from 5-phospho-alpha-D-ribose 1-diphosphate: step 2/2. The protein is Phosphoribosylamine--glycine ligase of Methanococcus maripaludis (strain C5 / ATCC BAA-1333).